The chain runs to 160 residues: uncharacterized protein (160 aa).

The 143-residue stretch at 9–151 folds into the N-acetyltransferase domain; sequence LLINYKTLEK…GENPLIWLPE (143 aa).

This is an uncharacterized protein from Oceanobacillus iheyensis (strain DSM 14371 / CIP 107618 / JCM 11309 / KCTC 3954 / HTE831).